Reading from the N-terminus, the 313-residue chain is Ribonuclease HIII (313 aa).

The interval A63 to Y85 is disordered. Residues P70 to D82 show a composition bias toward basic and acidic residues. In terms of domain architecture, RNase H type-2 spans M94–K310. Residues D100, E101, and D205 each contribute to the a divalent metal cation site.

Belongs to the RNase HII family. RnhC subfamily. Interacts with the RNA polymerase core. It depends on Mn(2+) as a cofactor. Requires Mg(2+) as cofactor.

The protein resides in the cytoplasm. The enzyme catalyses Endonucleolytic cleavage to 5'-phosphomonoester.. Functionally, endonuclease that specifically degrades the RNA of RNA-DNA hybrids. The polypeptide is Ribonuclease HIII (rnhC) (Bacillus subtilis (strain 168)).